Here is a 344-residue protein sequence, read N- to C-terminus: Methionine import ATP-binding protein MetN (344 aa).

Residues Ile2 to Ile241 form the ABC transporter domain. An ATP-binding site is contributed by Gly38–Ser45.

This sequence belongs to the ABC transporter superfamily. Methionine importer (TC 3.A.1.24) family. As to quaternary structure, the complex is composed of two ATP-binding proteins (MetN), two transmembrane proteins (MetI) and a solute-binding protein (MetQ).

Its subcellular location is the cell inner membrane. The enzyme catalyses L-methionine(out) + ATP + H2O = L-methionine(in) + ADP + phosphate + H(+). It carries out the reaction D-methionine(out) + ATP + H2O = D-methionine(in) + ADP + phosphate + H(+). Part of the ABC transporter complex MetNIQ involved in methionine import. Responsible for energy coupling to the transport system. This chain is Methionine import ATP-binding protein MetN, found in Aliivibrio fischeri (strain ATCC 700601 / ES114) (Vibrio fischeri).